The sequence spans 134 residues: Small ribosomal subunit protein uS8c (134 aa).

It belongs to the universal ribosomal protein uS8 family. Part of the 30S ribosomal subunit.

It localises to the plastid. Its subcellular location is the chloroplast. One of the primary rRNA binding proteins, it binds directly to 16S rRNA central domain where it helps coordinate assembly of the platform of the 30S subunit. The sequence is that of Small ribosomal subunit protein uS8c (rps8) from Aethionema grandiflorum (Persian stone-cress).